The sequence spans 121 residues: Immunoglobulin heavy variable 6-1 (121 aa).

The signal sequence occupies residues 1-20; it reads MSVSFLIFLPVLGLPWGVLS. The segment at 21 to 45 is framework-1; that stretch reads QVQLQQSGPGLVKPSQTLSLTCAIS. Positions 21–121 constitute an Ig-like domain; that stretch reads QVQLQQSGPG…EDTAVYYCAR (101 aa). A disulfide bridge connects residues Cys-42 and Cys-119. Residues 46–55 form a complementarity-determining-1 region; it reads GDSVSSNSAA. The framework-2 stretch occupies residues 56 to 72; that stretch reads WNWIRQSPSRGLEWLGR. Residues 73 to 81 are complementarity-determining-2; the sequence is TYYRSKWYN. Positions 82 to 119 are framework-3; the sequence is DYAVSVKSRITINPDTSKNQFSLQLNSVTPEDTAVYYC. The complementarity-determining-3 stretch occupies residues 120-121; the sequence is AR.

In terms of assembly, immunoglobulins are composed of two identical heavy chains and two identical light chains; disulfide-linked.

The protein localises to the secreted. The protein resides in the cell membrane. Functionally, v region of the variable domain of immunoglobulin heavy chains that participates in the antigen recognition. Immunoglobulins, also known as antibodies, are membrane-bound or secreted glycoproteins produced by B lymphocytes. In the recognition phase of humoral immunity, the membrane-bound immunoglobulins serve as receptors which, upon binding of a specific antigen, trigger the clonal expansion and differentiation of B lymphocytes into immunoglobulins-secreting plasma cells. Secreted immunoglobulins mediate the effector phase of humoral immunity, which results in the elimination of bound antigens. The antigen binding site is formed by the variable domain of one heavy chain, together with that of its associated light chain. Thus, each immunoglobulin has two antigen binding sites with remarkable affinity for a particular antigen. The variable domains are assembled by a process called V-(D)-J rearrangement and can then be subjected to somatic hypermutations which, after exposure to antigen and selection, allow affinity maturation for a particular antigen. The polypeptide is Immunoglobulin heavy variable 6-1 (Homo sapiens (Human)).